Reading from the N-terminus, the 379-residue chain is Mating-type protein MAT-1 (379 aa).

A DNA-binding region (alpha box) is located at residues Lys-60–Arg-117.

Belongs to the MATALPHA1 family.

It localises to the nucleus. In terms of biological role, mating type proteins are sequence specific DNA-binding proteins that act as master switches in fungal differentiation by controlling gene expression in a cell type-specific fashion. Transcriptional activator that induces the transcription of alpha-specific genes. The protein is Mating-type protein MAT-1 (MAT1) of Cochliobolus carbonum (strain 26-R-13) (Maize leaf spot fungus).